The sequence spans 485 residues: ATP synthase subunit beta (485 aa).

A disordered region spans residues 1–20; sequence MSTTKTTKMTVKTGSKGTSG. An ATP-binding site is contributed by 170–177; sequence GGAGVGKT.

It belongs to the ATPase alpha/beta chains family. F-type ATPases have 2 components, CF(1) - the catalytic core - and CF(0) - the membrane proton channel. CF(1) has five subunits: alpha(3), beta(3), gamma(1), delta(1), epsilon(1). CF(0) has three main subunits: a(1), b(2) and c(9-12). The alpha and beta chains form an alternating ring which encloses part of the gamma chain. CF(1) is attached to CF(0) by a central stalk formed by the gamma and epsilon chains, while a peripheral stalk is formed by the delta and b chains.

The protein resides in the cell membrane. The enzyme catalyses ATP + H2O + 4 H(+)(in) = ADP + phosphate + 5 H(+)(out). Produces ATP from ADP in the presence of a proton gradient across the membrane. The catalytic sites are hosted primarily by the beta subunits. This chain is ATP synthase subunit beta, found in Mycobacterium leprae (strain TN).